We begin with the raw amino-acid sequence, 412 residues long: Keratin, type I microfibrillar 48 kDa, component 8C-1 (412 aa).

Ser-1 carries the post-translational modification N-acetylserine. Residues 1 to 55 (SFNFCLPNLSFRSSCSSRPCVPSSCCGTTLPGACNIPANVGSCNWFCEGSFDGNE) are head. In terms of domain architecture, IF rod spans 55–366 (EKETMQFLND…GLLDSEDCKL (312 aa)). Positions 56–90 (KETMQFLNDRLASYLEKVRQLERENAELESRILER) are coil 1A. The linker 1 stretch occupies residues 91–101 (SQQQEPLVCPN). Residues 102–202 (YQSYFRTIEE…HEEEVNTLRS (101 aa)) are coil 1B. The segment at 203 to 218 (QLGDRLNVEVDAAPTV) is linker 12. The coil 2 stretch occupies residues 219–362 (DLNRVLNETR…NTYRGLLDSE (144 aa)). Positions 363–412 (DCKLPCNPCATTNACGKTITPCISSPCAPAAPCTPCVPRSRCGPCNSYVR) are tail.

It belongs to the intermediate filament family.

Functionally, wool microfibrillar keratin. The chain is Keratin, type I microfibrillar 48 kDa, component 8C-1 from Ovis aries (Sheep).